The sequence spans 196 residues: uncharacterized protein (196 aa).

The interval 44-80 (RSVAVPGTEGKKAQNLRQLPAARLTYPTSSSTRPSHA) is disordered.

This is an uncharacterized protein from Treponema pallidum (strain Nichols).